We begin with the raw amino-acid sequence, 413 residues long: Aspartate aminotransferase, cytoplasmic (413 aa).

Positions 39 and 141 each coordinate L-aspartate. S149 carries the phosphoserine modification. L-aspartate is bound at residue N195. At K259 the chain carries N6-(pyridoxal phosphate)lysine. Residue R387 coordinates L-aspartate.

It belongs to the class-I pyridoxal-phosphate-dependent aminotransferase family. Homodimer. Pyridoxal 5'-phosphate serves as cofactor.

The protein resides in the cytoplasm. It catalyses the reaction L-aspartate + 2-oxoglutarate = oxaloacetate + L-glutamate. It carries out the reaction L-cysteine + 2-oxoglutarate = 2-oxo-3-sulfanylpropanoate + L-glutamate. The enzyme catalyses (2S)-2-aminobutanoate + 2-oxoglutarate = 2-oxobutanoate + L-glutamate. The catalysed reaction is 3-sulfino-L-alanine + 2-oxoglutarate = 3-sulfinopyruvate + L-glutamate. Its function is as follows. Biosynthesis of L-glutamate from L-aspartate or L-cysteine. Important regulator of levels of glutamate, the major excitatory neurotransmitter of the vertebrate central nervous system. Acts as a scavenger of glutamate in brain neuroprotection. The aspartate aminotransferase activity is involved in hepatic glucose synthesis during development and in adipocyte glyceroneogenesis. Using L-cysteine as substrate, regulates levels of mercaptopyruvate, an important source of hydrogen sulfide. Mercaptopyruvate is converted into H(2)S via the action of 3-mercaptopyruvate sulfurtransferase (3MST). Hydrogen sulfide is an important synaptic modulator and neuroprotectant in the brain. This chain is Aspartate aminotransferase, cytoplasmic, found in Pan troglodytes (Chimpanzee).